The primary structure comprises 92 residues: Small ribosomal subunit protein uS19c (92 aa).

The protein belongs to the universal ribosomal protein uS19 family.

It is found in the plastid. The protein resides in the chloroplast. Its function is as follows. Protein S19 forms a complex with S13 that binds strongly to the 16S ribosomal RNA. The polypeptide is Small ribosomal subunit protein uS19c (Manihot esculenta (Cassava)).